The following is a 205-amino-acid chain: High frequency lysogenization protein HflD homolog (205 aa).

It belongs to the HflD family.

It is found in the cytoplasm. The protein localises to the cell inner membrane. The chain is High frequency lysogenization protein HflD homolog from Photobacterium profundum (strain SS9).